Consider the following 1082-residue polypeptide: Inner tegument protein (1082 aa).

Positions 604–1082 are interaction with large tegument protein; it reads DHIDCLFNIS…QQDLIAPLTF (479 aa).

It belongs to the herpesviridae inner tegument protein family. In terms of assembly, interacts (via C-terminus) with the large tegument protein/LTP (via N-terminus).

It is found in the virion tegument. It localises to the host cytoplasm. The protein resides in the host nucleus. Its subcellular location is the host Golgi apparatus. The protein localises to the host trans-Golgi network. Plays an essential role in cytoplasmic secondary envelopment during viral egress. Interacts with the capsid via the large tegument protein/LTP and participates in its transport to the host trans-Golgi network (TGN) where secondary envelopment occurs. Modulates tegumentation and capsid accumulation at the viral assembly complex. In Homo sapiens (Human), this protein is Inner tegument protein (U30).